A 360-amino-acid chain; its full sequence is Phospho-N-acetylmuramoyl-pentapeptide-transferase (360 aa).

Residues 1–25 are Periplasmic-facing; sequence MLVWLAEHLVKYYSGFNVFSYLTFR. The helical transmembrane segment at 26 to 46 threads the bilayer; sequence AIVSLLTALFISLWMGPRMIA. At 47 to 71 the chain is on the cytoplasmic side; sequence RLQKLSFGQVVRNDGPESHFSKRGT. A helical membrane pass occupies residues 72–92; the sequence is PTMGGIMILTAIVISVLLWAY. A topological domain (periplasmic) is located at residue proline 93. The chain crosses the membrane as a helical span at residues 94 to 114; it reads SNPYVWCVLVVLIGYGIIGFV. The Cytoplasmic segment spans residues 115–131; the sequence is DDYHKVVRKDTKGLIAR. A helical membrane pass occupies residues 132–152; it reads WKYFWMSVIALGVAFALYLVG. Topologically, residues 153–167 are periplasmic; that stretch reads KDTPATQLVVPFFKD. The helical transmembrane segment at 168–188 threads the bilayer; that stretch reads VMPQLGLFYILLSYFVIVGTG. Residues 189-198 lie on the Cytoplasmic side of the membrane; the sequence is NAVNLTDGLD. A helical transmembrane segment spans residues 199–219; that stretch reads GLAIMPTVFVAAGFALVAWAT. Residues 220–235 lie on the Periplasmic side of the membrane; sequence GNMNFANYLHIPYLRY. A helical transmembrane segment spans residues 236–256; the sequence is AGELVIVCTAIVGAGLGFLWF. At 257 to 262 the chain is on the cytoplasmic side; the sequence is NTYPAQ. Residues 263–283 form a helical membrane-spanning segment; that stretch reads VFMGDVGSLALGGALGIIAVL. Residues 284 to 287 lie on the Periplasmic side of the membrane; that stretch reads LRQE. Residues 288–308 form a helical membrane-spanning segment; it reads FLLVIMGGVFVVETLSVILQV. Over 309-337 the chain is Cytoplasmic; sequence GSFKLRGQRIFRMAPIHHHYELKGWPEPR. Residues 338 to 358 traverse the membrane as a helical segment; the sequence is VIVRFWIISLMLVLIGLATLK. Residues 359–360 are Periplasmic-facing; it reads VR.

This sequence belongs to the glycosyltransferase 4 family. MraY subfamily. Requires Mg(2+) as cofactor.

The protein localises to the cell inner membrane. The catalysed reaction is UDP-N-acetyl-alpha-D-muramoyl-L-alanyl-gamma-D-glutamyl-meso-2,6-diaminopimeloyl-D-alanyl-D-alanine + di-trans,octa-cis-undecaprenyl phosphate = di-trans,octa-cis-undecaprenyl diphospho-N-acetyl-alpha-D-muramoyl-L-alanyl-D-glutamyl-meso-2,6-diaminopimeloyl-D-alanyl-D-alanine + UMP. Its pathway is cell wall biogenesis; peptidoglycan biosynthesis. In terms of biological role, catalyzes the initial step of the lipid cycle reactions in the biosynthesis of the cell wall peptidoglycan: transfers peptidoglycan precursor phospho-MurNAc-pentapeptide from UDP-MurNAc-pentapeptide onto the lipid carrier undecaprenyl phosphate, yielding undecaprenyl-pyrophosphoryl-MurNAc-pentapeptide, known as lipid I. This Salmonella paratyphi A (strain ATCC 9150 / SARB42) protein is Phospho-N-acetylmuramoyl-pentapeptide-transferase.